Consider the following 107-residue polypeptide: Proteinase inhibitor I-A (107 aa).

The signal sequence occupies residues 1–22 (MVKFAHVVAFLLLASLIQPLTA). Residues 23 to 36 (RDLEINVLQLDVSQ) constitute a propeptide that is removed on maturation.

This sequence belongs to the protease inhibitor I13 (potato type I serine protease inhibitor) family.

Its subcellular location is the secreted. This is Proteinase inhibitor I-A (TIMPB) from Nicotiana tabacum (Common tobacco).